We begin with the raw amino-acid sequence, 253 residues long: MKHIPRKRFGQHFLSDSGIIDAIVRAIAPEPGQPMVEIGPGLAALTQPLVERLGRLTVVELDRDLAARLRQHGQLDVIESDVLKVDFAQVAQALNAPKIRVVGNLPYNISTPILFHLLAHVRVIADQHFMLQKEVIDRMVAAPATSAYGRLSVMLQWRYAMENVLFVPPESFDPPPRVDSAVVRMVPHEAPEALSMPVLEELVQVAFSQRRKLLRHTLGRWLEARQFAGTFDTQRRAEEVPVSEYVALAQKCS.

S-adenosyl-L-methionine contacts are provided by His12, Leu14, Gly39, Glu60, Asp81, and Asn104.

Belongs to the class I-like SAM-binding methyltransferase superfamily. rRNA adenine N(6)-methyltransferase family. RsmA subfamily.

Its subcellular location is the cytoplasm. The catalysed reaction is adenosine(1518)/adenosine(1519) in 16S rRNA + 4 S-adenosyl-L-methionine = N(6)-dimethyladenosine(1518)/N(6)-dimethyladenosine(1519) in 16S rRNA + 4 S-adenosyl-L-homocysteine + 4 H(+). Functionally, specifically dimethylates two adjacent adenosines (A1518 and A1519) in the loop of a conserved hairpin near the 3'-end of 16S rRNA in the 30S particle. May play a critical role in biogenesis of 30S subunits. This is Ribosomal RNA small subunit methyltransferase A from Acidovorax ebreus (strain TPSY) (Diaphorobacter sp. (strain TPSY)).